We begin with the raw amino-acid sequence, 1209 residues long: MATTSHMFMYSLTIQPPTAITQAILGQFAGTKEQQIVTASGSKLTIHRPDPTQGKVIPLYTQDVFGIIRTLAAFRLAGSNKDYIIIGSDSGRITIIEYVPSQNRFNRIHLETFGKSGVRRVVPGQYLAVDPKGRACLIASVEKNKLVYVLNRNSQAELTISSPLEAHKPQTLVYSVVALDAGYENPVFAALEVDYSESDQDPTGRAYEEVEKLLVYYELDLGLNHVVRKWTDPVDRTSSMLFQVPGGADGPSGVLVCAEDNITYRHSNQDAFRVPIPRRKGAMENPERKRCITAGVMHKMRGAFFFLLQTEDGDLFKLTLDMVEDDKGQLTGEVKGLKIKYFDTVPLASSLLILKSGFLYVAAEGGNHHFYQFEKLGDDDEETEFNSDDFSADPAAPCTPVYFQPRGAENLNLVEAINSLNPLVDSKVVNISEDDAPQIFTVSGTGARSTFRTLKHGLEVSEIVESELPSVPSAVWTTKLTRADEFDAYIVLSFANGTLVLSIGETVEEVTDTGFLSSAPTLAVQQLGEDSLIQIHPRGIRHILADRRVNEWPAPQHRSIVAAATNERQVAVALSSGEIVYFELDADGSLAEYDERRQMSGTVTCLSLGEVPEGRVRSSFLAVGCDDSTVRILSLDPDTTLENKSVQALTAAPSALNIIAMADSSSGGTTLYLHIGLHSGVYLRTALDEVTGELSDTRTRFLGSKAVKLFQVSVTGQTAVLALSSRPWLGYSDTQTKGFMLTPLDYVGLEWGWNFSSEQCVEGMVGIQGQNLRIFSIEKLDNNMLQQSIPLAYTPRHFIKHPEEPLFYVIEADNNVLSPATRARLLEDSKARGGDTTVLPPEDFGYPRGTGHWASCIQIIDPLDAKAVVGAVELEENEAAVSIAAVPFTSQDDETFLVVGTAKDMTVNPPSSAGGYIHIYRFQEDGKELEFIHKTKVEEPPLALLGFQGRLLAGVGSVLRIYDLGMKQLLRKCQAAVAPKAIVGLQTQGSRIVVSDVRESVTYVVYKYQDNVLIPFVDDSIARWTTAATMVDYETTAGGDKFGNLWLVRCPKKASEEADEEGSGAHLIHDRGYLQGTPNRLELMIHVFTQDIPTSLHKTQLVAGGRDILVWTGFQGTIGILVPFVSREDVDFFQSLEMQLASQCPPLAGRDHLIYRSYYAPVKGVIDGDLCEQYFLLSNDTKMMIAAELDRSVREIERKISDMRTRVAY.

The protein belongs to the RSE1 family. Associated with the spliceosome.

It localises to the nucleus. Its function is as follows. Involved in pre-mRNA splicing and cell cycle control. This is Pre-mRNA-splicing factor rse1 (rse1) from Emericella nidulans (strain FGSC A4 / ATCC 38163 / CBS 112.46 / NRRL 194 / M139) (Aspergillus nidulans).